Reading from the N-terminus, the 226-residue chain is ATP synthase F(0) complex subunit a (226 aa).

6 consecutive transmembrane segments (helical) span residues 6-26, 68-88, 97-117, 138-158, 164-184, and 189-209; these read FASF…IIMF, WALM…LGLL, QLSM…ILGF, IPML…ALAV, ITAG…LMDI, and ATIT…VALI.

This sequence belongs to the ATPase A chain family. In terms of assembly, component of the ATP synthase complex composed at least of ATP5F1A/subunit alpha, ATP5F1B/subunit beta, ATP5MC1/subunit c (homooctomer), MT-ATP6/subunit a, MT-ATP8/subunit 8, ATP5ME/subunit e, ATP5MF/subunit f, ATP5MG/subunit g, ATP5MK/subunit k, ATP5MJ/subunit j, ATP5F1C/subunit gamma, ATP5F1D/subunit delta, ATP5F1E/subunit epsilon, ATP5PF/subunit F6, ATP5PB/subunit b, ATP5PD/subunit d, ATP5PO/subunit OSCP. ATP synthase complex consists of a soluble F(1) head domain (subunits alpha(3) and beta(3)) - the catalytic core - and a membrane F(0) domain - the membrane proton channel (subunits c, a, 8, e, f, g, k and j). These two domains are linked by a central stalk (subunits gamma, delta, and epsilon) rotating inside the F1 region and a stationary peripheral stalk (subunits F6, b, d, and OSCP). Interacts with DNAJC30; interaction is direct.

It localises to the mitochondrion inner membrane. It carries out the reaction H(+)(in) = H(+)(out). Functionally, subunit a, of the mitochondrial membrane ATP synthase complex (F(1)F(0) ATP synthase or Complex V) that produces ATP from ADP in the presence of a proton gradient across the membrane which is generated by electron transport complexes of the respiratory chain. ATP synthase complex consist of a soluble F(1) head domain - the catalytic core - and a membrane F(1) domain - the membrane proton channel. These two domains are linked by a central stalk rotating inside the F(1) region and a stationary peripheral stalk. During catalysis, ATP synthesis in the catalytic domain of F(1) is coupled via a rotary mechanism of the central stalk subunits to proton translocation. With the subunit c (ATP5MC1), forms the proton-conducting channel in the F(0) domain, that contains two crucial half-channels (inlet and outlet) that facilitate proton movement from the mitochondrial intermembrane space (IMS) into the matrix. Protons are taken up via the inlet half-channel and released through the outlet half-channel, following a Grotthuss mechanism. This is ATP synthase F(0) complex subunit a from Rattus norvegicus (Rat).